The sequence spans 84 residues: Putative defensin-like protein 38 (84 aa).

The signal sequence occupies residues 1 to 26 (MASSKNGTVLFVSLMILLLISTGVKA). 4 disulfides stabilise this stretch: Cys28–Cys84, Cys41–Cys65, Cys50–Cys76, and Cys54–Cys78.

Belongs to the DEFL family.

It localises to the secreted. This Arabidopsis thaliana (Mouse-ear cress) protein is Putative defensin-like protein 38.